A 172-amino-acid polypeptide reads, in one-letter code: Large ribosomal subunit protein uL10 (172 aa).

The protein belongs to the universal ribosomal protein uL10 family. As to quaternary structure, part of the ribosomal stalk of the 50S ribosomal subunit. The N-terminus interacts with L11 and the large rRNA to form the base of the stalk. The C-terminus forms an elongated spine to which L12 dimers bind in a sequential fashion forming a multimeric L10(L12)X complex.

In terms of biological role, forms part of the ribosomal stalk, playing a central role in the interaction of the ribosome with GTP-bound translation factors. This is Large ribosomal subunit protein uL10 from Chlorobium phaeobacteroides (strain DSM 266 / SMG 266 / 2430).